A 480-amino-acid chain; its full sequence is Endothelial transcription factor GATA-2 (480 aa).

Residue Ser73 is modified to Phosphoserine. Residue Arg86 is modified to Asymmetric dimethylarginine. The interval 166 to 208 (SGSHLFGFPPTPPKEVSPDPSTTGAASPASPSAGGSVARGEDK) is disordered. The segment covering 183 to 201 (PDPSTTGAASPASPSAGGS) has biased composition (low complexity). Ser192 carries the post-translational modification Phosphoserine. 2 GATA-type zinc fingers span residues 295–319 (CVNC…CNAC) and 349–373 (CANC…CNAC). Lys389 is covalently cross-linked (Glycyl lysine isopeptide (Lys-Gly) (interchain with G-Cter in SUMO2)). Residues 457-480 (TPIHPSSSLSFGHPHPSSMVTAMG) are disordered.

In terms of assembly, interacts with BRD3. Interacts with AR and CCAR1. Interacts with MDFIC.

The protein resides in the nucleus. Functionally, transcriptional activator which regulates endothelin-1 gene expression in endothelial cells. Binds to the consensus sequence 5'-AGATAG-3'. Plays an important role in the regulation of phagocytosis in alveolar macrophages, particularly during P.carinii infection. The polypeptide is Endothelial transcription factor GATA-2 (Rattus norvegicus (Rat)).